Consider the following 126-residue polypeptide: Small ribosomal subunit protein uS13 (126 aa).

Residues arginine 94 to lysine 126 are disordered. Basic residues predominate over residues arginine 108–lysine 126.

It belongs to the universal ribosomal protein uS13 family. As to quaternary structure, part of the 30S ribosomal subunit. Forms a loose heterodimer with protein S19. Forms two bridges to the 50S subunit in the 70S ribosome.

Located at the top of the head of the 30S subunit, it contacts several helices of the 16S rRNA. In the 70S ribosome it contacts the 23S rRNA (bridge B1a) and protein L5 of the 50S subunit (bridge B1b), connecting the 2 subunits; these bridges are implicated in subunit movement. Contacts the tRNAs in the A and P-sites. This chain is Small ribosomal subunit protein uS13, found in Streptomyces avermitilis (strain ATCC 31267 / DSM 46492 / JCM 5070 / NBRC 14893 / NCIMB 12804 / NRRL 8165 / MA-4680).